The following is a 106-amino-acid chain: uncharacterized protein (106 aa).

2 consecutive transmembrane segments (helical) span residues 46–68 and 73–92; these read LLQEIILFVFCALMVVSAAILAF and AVFIVLQVCVLAVLPILIAA.

It localises to the cell membrane. This is an uncharacterized protein from Bacillus subtilis (strain 168).